The sequence spans 306 residues: Ornithine carbamoyltransferase (306 aa).

Carbamoyl phosphate-binding positions include 46–49 (STRT), Q73, R97, and 124–127 (HPTQ). L-ornithine contacts are provided by residues N156, D220, and 224–225 (SM). Carbamoyl phosphate is bound by residues 260–261 (CL) and R288.

The protein belongs to the aspartate/ornithine carbamoyltransferase superfamily. OTCase family.

The protein localises to the cytoplasm. The enzyme catalyses carbamoyl phosphate + L-ornithine = L-citrulline + phosphate + H(+). Its pathway is amino-acid degradation; L-arginine degradation via ADI pathway; carbamoyl phosphate from L-arginine: step 2/2. Reversibly catalyzes the transfer of the carbamoyl group from carbamoyl phosphate (CP) to the N(epsilon) atom of ornithine (ORN) to produce L-citrulline. This is Ornithine carbamoyltransferase from Campylobacter jejuni subsp. jejuni serotype O:6 (strain 81116 / NCTC 11828).